Reading from the N-terminus, the 299-residue chain is Tyrosine recombinase XerC (299 aa).

One can recognise a Core-binding (CB) domain in the interval 1-85; that stretch reads MERQLDAYCE…AVRGLYHYLN (85 aa). Residues 106–285 form the Tyr recombinase domain; it reads RLPKTLDTDR…DFQHLAAVYD (180 aa). Active-site residues include Arg-146, Lys-170, His-237, Arg-240, and His-263. Tyr-272 acts as the O-(3'-phospho-DNA)-tyrosine intermediate in catalysis.

This sequence belongs to the 'phage' integrase family. XerC subfamily. In terms of assembly, forms a cyclic heterotetrameric complex composed of two molecules of XerC and two molecules of XerD.

Its subcellular location is the cytoplasm. In terms of biological role, site-specific tyrosine recombinase, which acts by catalyzing the cutting and rejoining of the recombining DNA molecules. The XerC-XerD complex is essential to convert dimers of the bacterial chromosome into monomers to permit their segregation at cell division. It also contributes to the segregational stability of plasmids. This is Tyrosine recombinase XerC from Pseudomonas fluorescens (strain Pf0-1).